The chain runs to 971 residues: Reversion-inducing cysteine-rich protein with Kazal motifs (971 aa).

A signal peptide spans 1-22; the sequence is MATVRASLRGALLLLLAVAGVA. One copy of the Knot 1 repeat lies at 37–84; it reads CCNHSKDNQMCRDVCEQIFSSKSESRLKHLLQRAPDYCPETMVEIWNC. The segment at 37–338 is 5 X Knot repeats; sequence CCNHSKDNQM…NPVEVSMLTC (302 aa). N-linked (GlcNAc...) asparagine glycans are attached at residues asparagine 39 and asparagine 86. 2 Knot repeats span residues 104–141 and 151–197; these read CCEL…LFSC and CCSY…LIHC. N-linked (GlcNAc...) asparagine glycosylation occurs at asparagine 200. Knot repeat units lie at residues 216–263 and 292–338; these read CCDR…LWQC and CCSK…MLTC. N-linked (GlcNAc...) asparagine glycosylation is found at asparagine 297 and asparagine 352. Kazal-like domains follow at residues 627–673, 698–752, and 753–789; these read TFTG…SCMS, TFDK…PCQP, and FCRA…DCQA. Cystine bridges form between cysteine 633–cysteine 658, cysteine 635–cysteine 654, cysteine 643–cysteine 671, cysteine 716–cysteine 735, cysteine 724–cysteine 750, and cysteine 761–cysteine 787. Serine 942 is lipidated: GPI-anchor amidated serine. A propeptide spans 943 to 971 (removed in mature form); that stretch reads AGVRARPSCHSLLLPLSLGLALHLLWTYN.

The protein belongs to the RECK family. As to quaternary structure, interacts (via knot repeats) with WNT7A (via disordered linker region); the interaction is direct. Interacts (via knot repeats) with WNT7B (via disordered linker region); the interaction is direct. Interacts with ADGRA2; the interaction is direct. Interacts with MMP9. Post-translationally, N-glycosylated. Expressed in various tissues and untransformed cells. It is undetectable in tumor-derived cell lines and oncogenically transformed cells.

It localises to the cell membrane. In terms of biological role, functions together with ADGRA2 to enable brain endothelial cells to selectively respond to Wnt7 signals (WNT7A or WNT7B). Plays a key role in Wnt7-specific responses: required for central nervous system (CNS) angiogenesis and blood-brain barrier regulation. Acts as a Wnt7-specific coactivator of canonical Wnt signaling by decoding Wnt ligands: acts by interacting specifically with the disordered linker region of Wnt7, thereby conferring ligand selectivity for Wnt7. ADGRA2 is then required to deliver RECK-bound Wnt7 to frizzled by assembling a higher-order RECK-ADGRA2-Fzd-LRP5-LRP6 complex. Also acts as a serine protease inhibitor: negatively regulates matrix metalloproteinase-9 (MMP9) by suppressing MMP9 secretion and by direct inhibition of its enzymatic activity. Also inhibits metalloproteinase activity of MMP2 and MMP14 (MT1-MMP). The chain is Reversion-inducing cysteine-rich protein with Kazal motifs from Homo sapiens (Human).